The following is a 71-amino-acid chain: Omega-conotoxin-like CnVIIF (71 aa).

3 disulfides stabilise this stretch: Cys-46/Cys-61, Cys-53/Cys-65, and Cys-60/Cys-70. Cys-70 is subject to Cysteine amide; in CnVIID.

It belongs to the conotoxin M superfamily. As to expression, expressed by the venom duct.

The protein localises to the secreted. In terms of biological role, omega-conotoxins act at presynaptic membranes, they bind and block voltage-gated calcium channels (Cav). In Conus consors (Singed cone), this protein is Omega-conotoxin-like CnVIIF.